A 123-amino-acid polypeptide reads, in one-letter code: MAKIKARDLRGKKKEELLKQLDDLKVELSQLRVAKVTGGAASKLSKIRVVRKSIARVLTVINQTQKENLRKFYKGKKYKPLDLRPKKTRALRRRLNKHEEGLRTKKQQRKDRLFSARKFAVKA.

It belongs to the universal ribosomal protein uL29 family. Component of the large ribosomal subunit.

It is found in the cytoplasm. Component of the large ribosomal subunit. The ribosome is a large ribonucleoprotein complex responsible for the synthesis of proteins in the cell. The chain is Large ribosomal subunit protein uL29 (rpl35) from Xenopus tropicalis (Western clawed frog).